The primary structure comprises 379 residues: Phospho-N-acetylmuramoyl-pentapeptide-transferase (379 aa).

Helical transmembrane passes span 27–47 (FRTA…GPAV), 76–96 (TMGG…WADL), 100–120 (FVWI…TDDY), 135–155 (AKMG…VLVQ), 185–205 (PHIW…VLVG), 218–238 (GLAI…TYVS), 255–275 (VGEL…FLWY), 283–303 (FMGD…AVII), 307–327 (LLLP…ILQV), and 356–376 (KIIV…LTTL).

Belongs to the glycosyltransferase 4 family. MraY subfamily. Mg(2+) serves as cofactor.

The protein localises to the cell inner membrane. The catalysed reaction is UDP-N-acetyl-alpha-D-muramoyl-L-alanyl-gamma-D-glutamyl-meso-2,6-diaminopimeloyl-D-alanyl-D-alanine + di-trans,octa-cis-undecaprenyl phosphate = di-trans,octa-cis-undecaprenyl diphospho-N-acetyl-alpha-D-muramoyl-L-alanyl-D-glutamyl-meso-2,6-diaminopimeloyl-D-alanyl-D-alanine + UMP. It functions in the pathway cell wall biogenesis; peptidoglycan biosynthesis. Catalyzes the initial step of the lipid cycle reactions in the biosynthesis of the cell wall peptidoglycan: transfers peptidoglycan precursor phospho-MurNAc-pentapeptide from UDP-MurNAc-pentapeptide onto the lipid carrier undecaprenyl phosphate, yielding undecaprenyl-pyrophosphoryl-MurNAc-pentapeptide, known as lipid I. The polypeptide is Phospho-N-acetylmuramoyl-pentapeptide-transferase (Koribacter versatilis (strain Ellin345)).